A 549-amino-acid polypeptide reads, in one-letter code: Solute carrier family 22 member 6 (549 aa).

The Cytoplasmic segment spans residues Met-1–Leu-23. A helical transmembrane segment spans residues Val-24–Ile-44. The Extracellular segment spans residues Pro-45–Gln-135. Asn-56, Asn-92, and Asn-113 each carry an N-linked (GlcNAc...) asparagine glycan. A helical membrane pass occupies residues Leu-136–Ala-156. Residues Asp-157–Val-164 lie on the Cytoplasmic side of the membrane. The chain crosses the membrane as a helical span at residues Leu-165–Phe-185. Topologically, residues Pro-186 to Ser-195 are extracellular. Residues Gly-196–Ile-216 traverse the membrane as a helical segment. Residues His-217–Thr-224 are Cytoplasmic-facing. Residues Leu-225 to Pro-245 traverse the membrane as a helical segment. Residues His-246–Arg-248 lie on the Extracellular side of the membrane. Residues Tyr-249–Ile-269 traverse the membrane as a helical segment. At Glu-270–Arg-337 the chain is on the cytoplasmic side. A helical membrane pass occupies residues Leu-338–Met-358. Residues Asp-359–Tyr-368 lie on the Extracellular side of the membrane. Residues Leu-369–Ile-389 traverse the membrane as a helical segment. Over Asn-390–Arg-395 the chain is Cytoplasmic. A helical transmembrane segment spans residues Pro-396 to Pro-416. Residues Lys-417–Ser-425 lie on the Extracellular side of the membrane. Residues Leu-426–Gly-446 traverse the membrane as a helical segment. Residues Glu-447–Thr-456 are Cytoplasmic-facing. A helical transmembrane segment spans residues Gly-457–Met-477. Residues Thr-478–Ser-484 are Extracellular-facing. A helical membrane pass occupies residues Val-485–Pro-505. The Cytoplasmic portion of the chain corresponds to Glu-506–Asn-549. A disordered region spans residues Asn-521 to Asn-549.

The protein belongs to the major facilitator (TC 2.A.1) superfamily. Organic cation transporter (TC 2.A.1.19) family. Glycosylated. Glycosylation is necessary for proper targeting of the transporter to the plasma membrane.

It localises to the basolateral cell membrane. Its subcellular location is the basal cell membrane. The catalysed reaction is (6R)-L-erythro-5,6,7,8-tetrahydrobiopterin(out) + a dicarboxylate(in) = (6R)-L-erythro-5,6,7,8-tetrahydrobiopterin(in) + a dicarboxylate(out). It catalyses the reaction L-erythro-7,8-dihydrobiopterin(out) + a dicarboxylate(in) = L-erythro-7,8-dihydrobiopterin(in) + a dicarboxylate(out). The enzyme catalyses L-sepiapterin(out) + a dicarboxylate(in) = L-sepiapterin(in) + a dicarboxylate(out). It carries out the reaction prostaglandin F2alpha(out) + a dicarboxylate(in) = prostaglandin F2alpha(in) + a dicarboxylate(out). The catalysed reaction is prostaglandin E2(out) + a dicarboxylate(in) = prostaglandin E2(in) + a dicarboxylate(out). It catalyses the reaction 3',5'-cyclic AMP(out) + a dicarboxylate(in) = 3',5'-cyclic AMP(in) + a dicarboxylate(out). The enzyme catalyses 3',5'-cyclic GMP(out) + a dicarboxylate(in) = 3',5'-cyclic GMP(in) + a dicarboxylate(out). It carries out the reaction urate(out) + a dicarboxylate(in) = urate(in) + a dicarboxylate(out). The catalysed reaction is kynurenate(out) + glutarate(in) = kynurenate(in) + glutarate(out). It catalyses the reaction (indol-3-yl)acetate(out) + a dicarboxylate(in) = (indol-3-yl)acetate(in) + a dicarboxylate(out). The enzyme catalyses indoxyl sulfate(out) + a dicarboxylate(in) = indoxyl sulfate(in) + a dicarboxylate(out). It carries out the reaction N-benzoylglycine(out) + a dicarboxylate(in) = N-benzoylglycine(in) + a dicarboxylate(out). The catalysed reaction is 3-carboxy-4-methyl-5-propyl-2-furanpropanoate(out) + a dicarboxylate(in) = 3-carboxy-4-methyl-5-propyl-2-furanpropanoate(in) + a dicarboxylate(out). In terms of biological role, secondary active transporter that functions as a Na(+)-independent organic anion (OA)/dicarboxylate antiporter where the uptake of one molecule of OA into the cell is coupled with an efflux of one molecule of intracellular dicarboxylate such as 2-oxoglutarate or glutarate. Mediates the uptake of OA across the basolateral side of proximal tubule epithelial cells, thereby contributing to the renal elimination of endogenous OA from the systemic circulation into the urine. Functions as a biopterin transporters involved in the uptake and the secretion of coenzymes tetrahydrobiopterin (BH4), dihydrobiopterin (BH2) and sepiapterin to urine, thereby determining baseline levels of blood biopterins. Transports prostaglandin E2 (PGE2) and prostaglandin F2-alpha (PGF2-alpha) and may contribute to their renal excretion. Also mediates the uptake of cyclic nucleotides such as cAMP and cGMP. Involved in the transport of neuroactive tryptophan metabolites kynurenate (KYNA) and xanthurenate (XA) and may contribute to their secretion from the brain. May transport glutamate. Also involved in the disposition of uremic toxins and potentially toxic xenobiotics by the renal organic anion secretory pathway, helping reduce their undesired toxicological effects on the body. Uremic toxins include the indoxyl sulfate (IS), hippurate/N-benzoylglycine (HA), indole acetate (IA), 3-carboxy-4- methyl-5-propyl-2-furanpropionate (CMPF) and urate. Xenobiotics include the mycotoxin ochratoxin (OTA). May also contribute to the transport of organic compounds in testes across the blood-testis-barrier. The chain is Solute carrier family 22 member 6 from Bos taurus (Bovine).